Here is a 142-residue protein sequence, read N- to C-terminus: Hemoglobin subunit alpha-A (142 aa).

The Globin domain maps to 2-142 (VLSGSDKTNV…VGNVLTAKYR (141 aa)). Histidine 59 is a binding site for O2. Histidine 88 is a binding site for heme b.

The protein belongs to the globin family. Heterotetramer of two alpha chains and two beta chains. As to expression, red blood cells.

In terms of biological role, involved in oxygen transport from the lung to the various peripheral tissues. The sequence is that of Hemoglobin subunit alpha-A (HBAA) from Ara ararauna (Blue-and-yellow macaw).